Reading from the N-terminus, the 749-residue chain is Triacylglycerol lipase 5 (749 aa).

Positions 54–59 (HAISYD) match the HXXXXD acyltransferase motif motif. Positions 183–388 (LVLSGGSTFG…DNDMPISRLS (206 aa)) constitute a PNPLA domain. The GXSXG signature appears at 214–218 (GSSAG). Catalysis depends on Ser-216, which acts as the Nucleophile. Asn-270, Asn-289, Asn-297, Asn-304, and Asn-321 each carry an N-linked (GlcNAc...) asparagine glycan. Asp-375 acts as the Proton acceptor in catalysis. Asn-474 and Asn-589 each carry an N-linked (GlcNAc...) asparagine glycan. The interval 585–643 (IKSPNKTAAPGRFPLQPLPSPSSTFNKRKMDMLSPSPSPSTSPQRSKSSFTQQGTRQKA) is disordered. Positions 623–633 (PSTSPQRSKSS) are enriched in low complexity. Residues 634–643 (FTQQGTRQKA) are compositionally biased toward polar residues. Phosphoserine is present on Ser-645. Residues Asn-680, Asn-714, and Asn-742 are each glycosylated (N-linked (GlcNAc...) asparagine).

The protein localises to the lipid droplet. The enzyme catalyses a triacylglycerol + H2O = a diacylglycerol + a fatty acid + H(+). The catalysed reaction is 1-(9Z-octadecenoyl)-sn-glycero-3-phosphate + (9Z)-octadecenoyl-CoA = 1,2-di-(9Z-octadecenoyl)-sn-glycero-3-phosphate + CoA. It carries out the reaction 1-(9Z-octadecenoyl)-sn-glycero-3-phosphate + hexadecanoyl-CoA = 1-hexadecanoyl-2-(9Z-octadecenoyl)-sn-glycero-3-phosphate + CoA. Its activity is regulated as follows. Loses its lipolytic activity in cells lacking nonpolar lipids, but retains its side activity as lysophospholipid acyltransferase. Lipid particle-localized triacylglycerol (TAG) lipase. The lipid droplet/particle is a lipid storage compartment which serves as a depot of energy and building blocks for membrane lipid biosynthesis. Involved in the mobilization of the non-polar storage lipids triacylglycerols (TAGs) from lipid particles by hydrolysis of TAGs, releasing and supplying specific fatty acids to the appropriate metabolic pathways. Also catalyzes the acylation of lysophosphatidic acid (LPA). The protein is Triacylglycerol lipase 5 (TGL5) of Saccharomyces cerevisiae (strain ATCC 204508 / S288c) (Baker's yeast).